The sequence spans 195 residues: ATP-dependent Clp protease proteolytic subunit (195 aa).

The active-site Nucleophile is S98. The active site involves H123.

It belongs to the peptidase S14 family. In terms of assembly, fourteen ClpP subunits assemble into 2 heptameric rings which stack back to back to give a disk-like structure with a central cavity, resembling the structure of eukaryotic proteasomes.

The protein localises to the cytoplasm. The catalysed reaction is Hydrolysis of proteins to small peptides in the presence of ATP and magnesium. alpha-casein is the usual test substrate. In the absence of ATP, only oligopeptides shorter than five residues are hydrolyzed (such as succinyl-Leu-Tyr-|-NHMec, and Leu-Tyr-Leu-|-Tyr-Trp, in which cleavage of the -Tyr-|-Leu- and -Tyr-|-Trp bonds also occurs).. Its function is as follows. Cleaves peptides in various proteins in a process that requires ATP hydrolysis. Has a chymotrypsin-like activity. Plays a major role in the degradation of misfolded proteins. The sequence is that of ATP-dependent Clp protease proteolytic subunit from Helicobacter pylori (strain G27).